A 272-amino-acid chain; its full sequence is 3-methyl-2-oxobutanoate hydroxymethyltransferase (272 aa).

Asp-50 and Asp-89 together coordinate Mg(2+). 3-methyl-2-oxobutanoate-binding positions include 50 to 51, Asp-89, and Lys-119; that span reads DS. Position 121 (Glu-121) interacts with Mg(2+). Glu-188 (proton acceptor) is an active-site residue.

The protein belongs to the PanB family. Homodecamer; pentamer of dimers. Mg(2+) serves as cofactor.

Its subcellular location is the cytoplasm. It catalyses the reaction 3-methyl-2-oxobutanoate + (6R)-5,10-methylene-5,6,7,8-tetrahydrofolate + H2O = 2-dehydropantoate + (6S)-5,6,7,8-tetrahydrofolate. The protein operates within cofactor biosynthesis; (R)-pantothenate biosynthesis; (R)-pantoate from 3-methyl-2-oxobutanoate: step 1/2. In terms of biological role, catalyzes the reversible reaction in which hydroxymethyl group from 5,10-methylenetetrahydrofolate is transferred onto alpha-ketoisovalerate to form ketopantoate. This is 3-methyl-2-oxobutanoate hydroxymethyltransferase from Methylobacterium radiotolerans (strain ATCC 27329 / DSM 1819 / JCM 2831 / NBRC 15690 / NCIMB 10815 / 0-1).